We begin with the raw amino-acid sequence, 153 residues long: Transcriptional repressor NrdR (153 aa).

The segment at 3–34 (CPFCAHDDSQVKDSRPAEDNAAIRRRRQCSKC) is a zinc-finger region. In terms of domain architecture, ATP-cone spans 49–139 (VTVVKSDDKR…VYRDFSEARD (91 aa)).

Belongs to the NrdR family. Requires Zn(2+) as cofactor.

Negatively regulates transcription of bacterial ribonucleotide reductase nrd genes and operons by binding to NrdR-boxes. This Erythrobacter litoralis (strain HTCC2594) protein is Transcriptional repressor NrdR.